Consider the following 89-residue polypeptide: Long neurotoxin homolog NTL2 (89 aa).

A signal peptide spans 1-21 (MKTLLLSLVVVIIVCLDLGYT). Intrachain disulfides connect Cys24–Cys45, Cys27–Cys32, Cys38–Cys66, Cys70–Cys81, and Cys82–Cys87. Residues 54-56 (RGD) carry the Cell attachment site motif.

The protein belongs to the three-finger toxin family. Ancestral subfamily. Orphan group V sub-subfamily. Expressed by the venom gland.

It localises to the secreted. In terms of biological role, exhibits M2 muscarinic acetylcholine receptor (CHRM2)-blocking activity, but has a weak binding activity toward nicotinic AChR. Moreover, it inhibits collagen-induced platelet aggregation. The chain is Long neurotoxin homolog NTL2 from Bungarus multicinctus (Many-banded krait).